We begin with the raw amino-acid sequence, 128 residues long: Fluoride-specific ion channel FluC 1 (128 aa).

4 helical membrane-spanning segments follow: residues valine 10–phenylalanine 30, glycine 32–leucine 52, alanine 59–phenylalanine 79, and phenylalanine 93–glycine 113. The Na(+) site is built by glycine 71 and threonine 74.

The protein belongs to the fluoride channel Fluc/FEX (TC 1.A.43) family.

The protein localises to the cell membrane. The catalysed reaction is fluoride(in) = fluoride(out). With respect to regulation, na(+) is not transported, but it plays an essential structural role and its presence is essential for fluoride channel function. Fluoride-specific ion channel. Important for reducing fluoride concentration in the cell, thus reducing its toxicity. This chain is Fluoride-specific ion channel FluC 1, found in Lactobacillus delbrueckii subsp. bulgaricus (strain ATCC 11842 / DSM 20081 / BCRC 10696 / JCM 1002 / NBRC 13953 / NCIMB 11778 / NCTC 12712 / WDCM 00102 / Lb 14).